Consider the following 124-residue polypeptide: ATP synthase epsilon chain (124 aa).

The protein belongs to the ATPase epsilon chain family. F-type ATPases have 2 components, CF(1) - the catalytic core - and CF(0) - the membrane proton channel. CF(1) has five subunits: alpha(3), beta(3), gamma(1), delta(1), epsilon(1). CF(0) has three main subunits: a, b and c.

It is found in the cell membrane. Its function is as follows. Produces ATP from ADP in the presence of a proton gradient across the membrane. The chain is ATP synthase epsilon chain from Corynebacterium efficiens (strain DSM 44549 / YS-314 / AJ 12310 / JCM 11189 / NBRC 100395).